A 464-amino-acid polypeptide reads, in one-letter code: MEGAPRRPDRHARSEEERHVSQYASRLGRRSPAAPTRRRMLRKPRRVAMLSVHTSPLHQPGTGDAGGMNVYIVELAQRLAAINIEVEIFTRATTAALRPTVELSPGVLVRHVDAGPYEGLAKEDLPAQLCAFTHGVMQAWAGHRPGYYDLVHSHYWLSGHVGWLAAQRWGTPLVHAMHTMAKVKNAALAEGDTPEPAARVIGEMQIVAAADRLIANTSEEADELVRHYEAERGKVAVVHPGVNLDRFRPADGRAAARARLGLPQDALIPLFAGRIQPLKAPDVLLRAVAVLLDERPELRSNLVVPVVGGPSGSGLAKPEGLQKLAARLGIADVVRFRPPVGQEQLADWFRAASVLVMPSYNESFGLVAIEAQAAGTPVLAASVGGLPVAVADGRTGFLVQGHDPAAYARVLRDFADDPALSARMGRAAARHAECFGWDTAASATADVYTAAMQAHRRRVRSHHG.

The segment covering 1–20 has biased composition (basic and acidic residues); the sequence is MEGAPRRPDRHARSEEERHV. The disordered stretch occupies residues 1-44; sequence MEGAPRRPDRHARSEEERHVSQYASRLGRRSPAAPTRRRMLRKP. Residue histidine 53 participates in 1D-myo-inositol 3-phosphate binding. UDP-N-acetyl-alpha-D-glucosamine is bound by residues 59 to 60 and glycine 67; that span reads QP. 1D-myo-inositol 3-phosphate-binding positions include 64–69, lysine 122, tyrosine 155, threonine 179, and arginine 199; that span reads DAGGMN. 3 residues coordinate UDP-N-acetyl-alpha-D-glucosamine: arginine 274, lysine 279, and valine 340. Residues phenylalanine 349, arginine 350, and alanine 352 each contribute to the Mg(2+) site. Positions 362 and 370 each coordinate UDP-N-acetyl-alpha-D-glucosamine. Threonine 376 provides a ligand contact to Mg(2+).

It belongs to the glycosyltransferase group 1 family. MshA subfamily. In terms of assembly, homodimer.

It catalyses the reaction 1D-myo-inositol 3-phosphate + UDP-N-acetyl-alpha-D-glucosamine = 1D-myo-inositol 2-acetamido-2-deoxy-alpha-D-glucopyranoside 3-phosphate + UDP + H(+). Catalyzes the transfer of a N-acetyl-glucosamine moiety to 1D-myo-inositol 3-phosphate to produce 1D-myo-inositol 2-acetamido-2-deoxy-glucopyranoside 3-phosphate in the mycothiol biosynthesis pathway. The chain is D-inositol 3-phosphate glycosyltransferase from Streptomyces avermitilis (strain ATCC 31267 / DSM 46492 / JCM 5070 / NBRC 14893 / NCIMB 12804 / NRRL 8165 / MA-4680).